We begin with the raw amino-acid sequence, 105 residues long: uncharacterized protein (105 aa).

The next 2 helical transmembrane spans lie at 26–46 (NVLI…CIAI) and 66–86 (SALA…TLAI).

It localises to the cell membrane. This is an uncharacterized protein from Mycoplasma pneumoniae (strain ATCC 29342 / M129 / Subtype 1) (Mycoplasmoides pneumoniae).